Consider the following 275-residue polypeptide: 4-diphosphocytidyl-2-C-methyl-D-erythritol kinase (275 aa).

K14 is a catalytic residue. P98–S108 contacts ATP. D140 is an active-site residue.

It belongs to the GHMP kinase family. IspE subfamily.

The enzyme catalyses 4-CDP-2-C-methyl-D-erythritol + ATP = 4-CDP-2-C-methyl-D-erythritol 2-phosphate + ADP + H(+). It participates in isoprenoid biosynthesis; isopentenyl diphosphate biosynthesis via DXP pathway; isopentenyl diphosphate from 1-deoxy-D-xylulose 5-phosphate: step 3/6. In terms of biological role, catalyzes the phosphorylation of the position 2 hydroxy group of 4-diphosphocytidyl-2C-methyl-D-erythritol. In Francisella tularensis subsp. tularensis (strain FSC 198), this protein is 4-diphosphocytidyl-2-C-methyl-D-erythritol kinase.